A 418-amino-acid polypeptide reads, in one-letter code: Trans-acting enoyl reductase (418 aa).

Belongs to the saccharopine dehydrogenase family. Enoyl reductase subfamily.

In terms of biological role, involved in the reduction of the double bond between C-4 and C-5 during phthiocerol dimycocerosates (DIM A) and glycosylated phenolphthiocerol dimycocerosates (PGL) biosynthesis. The protein is Trans-acting enoyl reductase of Mycobacterium tuberculosis (strain ATCC 25177 / H37Ra).